The sequence spans 415 residues: Mitogen-activated protein kinase mpkC (415 aa).

The 280-residue stretch at 20–299 (YANLQPVGLG…AEQGLMHPWM (280 aa)) folds into the Protein kinase domain. Residues 26–34 (VGLGTAGVV) and Lys49 contribute to the ATP site. Asp141 serves as the catalytic Proton acceptor. The residue at position 171 (Thr171) is a Phosphothreonine. A TXY motif is present at residues 171–173 (TGY). Tyr173 is subject to Phosphotyrosine.

This sequence belongs to the protein kinase superfamily. Ser/Thr protein kinase family. MAP kinase subfamily. HOG1 sub-subfamily. It depends on Mg(2+) as a cofactor. In terms of processing, dually phosphorylated on Thr-171 and Tyr-173, which activates the enzyme.

It carries out the reaction L-seryl-[protein] + ATP = O-phospho-L-seryl-[protein] + ADP + H(+). The enzyme catalyses L-threonyl-[protein] + ATP = O-phospho-L-threonyl-[protein] + ADP + H(+). Its activity is regulated as follows. Activated by tyrosine and threonine phosphorylation. Its function is as follows. Mitogen-activated protein kinase required for growth on media where sorbitol or mannitol is the sole carbon source. This Emericella nidulans (strain FGSC A4 / ATCC 38163 / CBS 112.46 / NRRL 194 / M139) (Aspergillus nidulans) protein is Mitogen-activated protein kinase mpkC (mpkC).